A 277-amino-acid polypeptide reads, in one-letter code: Probable endonuclease 4 (277 aa).

Zn(2+) contacts are provided by histidine 69, histidine 109, glutamate 145, aspartate 179, histidine 182, histidine 214, aspartate 227, histidine 229, and glutamate 259.

The protein belongs to the AP endonuclease 2 family. Zn(2+) serves as cofactor.

It catalyses the reaction Endonucleolytic cleavage to 5'-phosphooligonucleotide end-products.. Its function is as follows. Endonuclease IV plays a role in DNA repair. It cleaves phosphodiester bonds at apurinic or apyrimidinic (AP) sites, generating a 3'-hydroxyl group and a 5'-terminal sugar phosphate. This is Probable endonuclease 4 from Bacteroides thetaiotaomicron (strain ATCC 29148 / DSM 2079 / JCM 5827 / CCUG 10774 / NCTC 10582 / VPI-5482 / E50).